Here is a 160-residue protein sequence, read N- to C-terminus: Vesicle transport protein SFT2B (160 aa).

Position 1 is an N-acetylmethionine (Met1). Residues 1 to 36 (MDKLKKVLSGQDTEDRSGLSEVVEASSLSWSTRIKG) lie on the Cytoplasmic side of the membrane. Ser9 bears the Phosphoserine mark. Residues 37–57 (FIACFAIGILCSLLGTVLLWV) traverse the membrane as a helical segment. Over 58 to 63 (PRKGLH) the chain is Lumenal. A helical membrane pass occupies residues 64–84 (LFAVFYTFGNIASIGSTIFLM). Over 85–98 (GPVKQLKRMFEPTR) the chain is Cytoplasmic. The chain crosses the membrane as a helical span at residues 99–119 (LIATIMVLLCFALTLCSAFWW). The Lumenal segment spans residues 120 to 123 (HNKG). A helical transmembrane segment spans residues 124-144 (LALIFCILQSLALTWYSLSFI). Topologically, residues 145–160 (PFARDAVKKCFAVCLA) are cytoplasmic.

It belongs to the SFT2 family.

It localises to the membrane. In terms of biological role, may be involved in fusion of retrograde transport vesicles derived from an endocytic compartment with the Golgi complex. This chain is Vesicle transport protein SFT2B, found in Homo sapiens (Human).